The following is a 339-amino-acid chain: Fructose-1,6-bisphosphatase isozyme 2 (339 aa).

Residues 3–10 (DRSPFETD) are important for interaction with ALDOA. Residues Val-18 and 28–32 (TGELT) contribute to the AMP site. Mg(2+)-binding residues include Asp-69 and Glu-98. 113-114 (KY) is an AMP binding site. 3 residues coordinate Mg(2+): Asp-119, Leu-121, and Asp-122. Asp-122 lines the substrate pocket. Arg-141 lines the AMP pocket. The Nuclear localization signal motif lies at 204–208 (KKKGK). Position 213–216 (213–216 (NEGY)) interacts with substrate. Phosphotyrosine occurs at positions 216 and 219. Residues 245-249 (YVGSM), Tyr-265, and Lys-275 contribute to the substrate site. Position 281 (Glu-281) interacts with Mg(2+).

The protein belongs to the FBPase class 1 family. Homotetramer. Interacts with ALDOA; the interaction blocks inhibition by physiological concentrations of AMP and reduces inhibition by Ca(2+). Interacts with alpha-actinin and F-actin. The cofactor is Mg(2+). As to expression, expressed in muscle, intestine, brain and placenta and very weakly in liver.

It localises to the cell junction. Its subcellular location is the cytoplasm. The protein localises to the nucleus. The protein resides in the myofibril. It is found in the sarcomere. It localises to the z line. The enzyme catalyses beta-D-fructose 1,6-bisphosphate + H2O = beta-D-fructose 6-phosphate + phosphate. The protein operates within carbohydrate biosynthesis; gluconeogenesis. Its activity is regulated as follows. Subject to complex allosteric regulation. The enzyme can assume an active R-state, or an inactive T-state. Intermediate conformations may exist. AMP acts as an allosteric inhibitor. Fructose 2,6-bisphosphate acts as a competitive inhibitor. Strongly inhibited by Ca(2+). Its function is as follows. Catalyzes the hydrolysis of fructose 1,6-bisphosphate to fructose 6-phosphate in the presence of divalent cations and probably participates in glycogen synthesis from carbohydrate precursors, such as lactate. The sequence is that of Fructose-1,6-bisphosphatase isozyme 2 (Fbp2) from Mus musculus (Mouse).